The sequence spans 530 residues: Serendipity locus protein alpha (530 aa).

Transient expression in blastoderm from nuclear cycle 11 to the onset of gastrulation.

The protein localises to the cytoplasm. It localises to the cell membrane. Functionally, required for the cellularization of the syncytial blastoderm embryo. Involved in the localization of the actin filaments just prior to and during plasma membrane invagination. Sry-alpha together with nullo and bnk may provide auxiliary functions, by acting both to stabilize a large and dynamic microfilament structure and regulate its functions. This is Serendipity locus protein alpha (Sry-alpha) from Drosophila melanogaster (Fruit fly).